A 44-amino-acid polypeptide reads, in one-letter code: Large ribosomal subunit protein bL34 (44 aa).

The disordered stretch occupies residues 1-26 (MKMTFQPKKRQRAKVHGFRQRMKTAG). A compositionally biased stretch (basic residues) spans 7–22 (PKKRQRAKVHGFRQRM).

The protein belongs to the bacterial ribosomal protein bL34 family.

This is Large ribosomal subunit protein bL34 from Agathobacter rectalis (strain ATCC 33656 / DSM 3377 / JCM 17463 / KCTC 5835 / VPI 0990) (Eubacterium rectale).